The primary structure comprises 474 residues: Probable aspartate--tRNA ligase, cytoplasmic (474 aa).

Glutamate 203 serves as a coordination point for L-aspartate. Residues 225-228 (QLYK) form an aspartate region. L-aspartate is bound at residue arginine 247. ATP contacts are provided by residues 247 to 249 (RAE), 255 to 257 (RYL), and glutamate 397. L-aspartate-binding residues include serine 400 and arginine 404. 445–448 (GLER) contributes to the ATP binding site.

The protein belongs to the class-II aminoacyl-tRNA synthetase family. Type 2 subfamily. In terms of assembly, homodimer.

Its subcellular location is the cytoplasm. The catalysed reaction is tRNA(Asp) + L-aspartate + ATP = L-aspartyl-tRNA(Asp) + AMP + diphosphate. The polypeptide is Probable aspartate--tRNA ligase, cytoplasmic (Enterocytozoon bieneusi (strain H348) (Microsporidian parasite)).